The primary structure comprises 410 residues: Peptidase T (410 aa).

H78 lines the Zn(2+) pocket. D80 is a catalytic residue. D140 provides a ligand contact to Zn(2+). Residue E174 is the Proton acceptor of the active site. The Zn(2+) site is built by E175, D197, and H379.

The protein belongs to the peptidase M20B family. Requires Zn(2+) as cofactor.

Its subcellular location is the cytoplasm. The catalysed reaction is Release of the N-terminal residue from a tripeptide.. In terms of biological role, cleaves the N-terminal amino acid of tripeptides. This Vibrio atlanticus (strain LGP32) (Vibrio splendidus (strain Mel32)) protein is Peptidase T.